The primary structure comprises 456 residues: Bifunctional protein GlmU (456 aa).

Residues 1-229 (MSNSAMSVVI…LSEVEGVNNR (229 aa)) form a pyrophosphorylase region. UDP-N-acetyl-alpha-D-glucosamine-binding positions include 11-14 (LAAG), Lys25, Gln76, 81-82 (GT), 103-105 (YGD), Gly140, Glu154, Asn169, and Asn227. Asp105 contributes to the Mg(2+) binding site. Asn227 is a Mg(2+) binding site. The segment at 230-250 (LQLSALERVYQREQADRLLLA) is linker. Residues 251–456 (GVMLLDPARF…SGWQRPVKKK (206 aa)) are N-acetyltransferase. The UDP-N-acetyl-alpha-D-glucosamine site is built by Arg333 and Lys351. His363 functions as the Proton acceptor in the catalytic mechanism. 2 residues coordinate UDP-N-acetyl-alpha-D-glucosamine: Tyr366 and Asn377. Acetyl-CoA contacts are provided by residues Ala380, 386–387 (NY), Ser405, Ala423, and Arg440.

In the N-terminal section; belongs to the N-acetylglucosamine-1-phosphate uridyltransferase family. This sequence in the C-terminal section; belongs to the transferase hexapeptide repeat family. In terms of assembly, homotrimer. The cofactor is Mg(2+).

It localises to the cytoplasm. It catalyses the reaction alpha-D-glucosamine 1-phosphate + acetyl-CoA = N-acetyl-alpha-D-glucosamine 1-phosphate + CoA + H(+). The enzyme catalyses N-acetyl-alpha-D-glucosamine 1-phosphate + UTP + H(+) = UDP-N-acetyl-alpha-D-glucosamine + diphosphate. Its pathway is nucleotide-sugar biosynthesis; UDP-N-acetyl-alpha-D-glucosamine biosynthesis; N-acetyl-alpha-D-glucosamine 1-phosphate from alpha-D-glucosamine 6-phosphate (route II): step 2/2. The protein operates within nucleotide-sugar biosynthesis; UDP-N-acetyl-alpha-D-glucosamine biosynthesis; UDP-N-acetyl-alpha-D-glucosamine from N-acetyl-alpha-D-glucosamine 1-phosphate: step 1/1. It participates in bacterial outer membrane biogenesis; LPS lipid A biosynthesis. Functionally, catalyzes the last two sequential reactions in the de novo biosynthetic pathway for UDP-N-acetylglucosamine (UDP-GlcNAc). The C-terminal domain catalyzes the transfer of acetyl group from acetyl coenzyme A to glucosamine-1-phosphate (GlcN-1-P) to produce N-acetylglucosamine-1-phosphate (GlcNAc-1-P), which is converted into UDP-GlcNAc by the transfer of uridine 5-monophosphate (from uridine 5-triphosphate), a reaction catalyzed by the N-terminal domain. In Pectobacterium carotovorum subsp. carotovorum (strain PC1), this protein is Bifunctional protein GlmU.